The primary structure comprises 452 residues: MTKKIIAKKIIALVGRPNVGKSTLFNRLSMRKKAIVHDLPGVTRDRKYTDGRIGSFEFSLIDTPGFEENPDSFGKRLMEQTTKAINEADLICFMVDSRSGILPDDKLLSDFVRKYNKPAVLVINKCEKAFDFDKEYYKLGFDSMVAISAEHGTGMIDLYDEIIAKLPEEDSAEAEIHDPIKGDCLQIVVSGRPNAGKSTFINALINDERLLTGPEAGITRESIEIDWQYKGNHIKLIDTAGLRKKATITESLEKLSASDAINSIKFANTVILMIDALSPLKQQDLNIASHVANEGRSIVIVVNKWDLIKESEKEAFKEEFYYQINTTLPQVKGVPALFISAKNKQNIADVLDSCIKIYKTWNKKITTSKLNEWLNFTTEAHPLPLQKGGKRVRVKYMTQTKTRPPTFKLFSNNPEKITDSYTRYLVNNMREAFDMPGVPIRFNYIKTKNPYV.

2 consecutive EngA-type G domains span residues 9–170 (KIIA…PEED) and 185–362 (LQIV…KTWN). GTP is bound by residues 15 to 22 (GRPNVGKS), 62 to 66 (DTPGF), 124 to 127 (NKCE), 191 to 198 (GRPNAGKS), 238 to 242 (DTAGL), and 303 to 306 (NKWD). In terms of domain architecture, KH-like spans 363 to 448 (KKITTSKLNE…PIRFNYIKTK (86 aa)).

Belongs to the TRAFAC class TrmE-Era-EngA-EngB-Septin-like GTPase superfamily. EngA (Der) GTPase family. Associates with the 50S ribosomal subunit.

Functionally, GTPase that plays an essential role in the late steps of ribosome biogenesis. The sequence is that of GTPase Der from Rickettsia bellii (strain OSU 85-389).